Here is a 318-residue protein sequence, read N- to C-terminus: Putative S-adenosyl-L-methionine-dependent methyltransferase MMAR_1595 (318 aa).

S-adenosyl-L-methionine contacts are provided by residues Glu132 and 161-162; that span reads DL.

It belongs to the UPF0677 family.

Exhibits S-adenosyl-L-methionine-dependent methyltransferase activity. In Mycobacterium marinum (strain ATCC BAA-535 / M), this protein is Putative S-adenosyl-L-methionine-dependent methyltransferase MMAR_1595.